Here is a 207-residue protein sequence, read N- to C-terminus: Cytochrome c biogenesis ATP-binding export protein CcmA (207 aa).

Positions 4–207 (LEARELLCER…RISLTQTGAA (204 aa)) constitute an ABC transporter domain. 36 to 43 (GSNGAGKT) lines the ATP pocket.

Belongs to the ABC transporter superfamily. CcmA exporter (TC 3.A.1.107) family. The complex is composed of two ATP-binding proteins (CcmA) and two transmembrane proteins (CcmB).

Its subcellular location is the cell inner membrane. It carries out the reaction heme b(in) + ATP + H2O = heme b(out) + ADP + phosphate + H(+). In terms of biological role, part of the ABC transporter complex CcmAB involved in the biogenesis of c-type cytochromes; once thought to export heme, this seems not to be the case, but its exact role is uncertain. Responsible for energy coupling to the transport system. This Escherichia coli O6:H1 (strain CFT073 / ATCC 700928 / UPEC) protein is Cytochrome c biogenesis ATP-binding export protein CcmA.